The primary structure comprises 340 residues: Heat-inducible transcription repressor HrcA (340 aa).

This sequence belongs to the HrcA family.

Its function is as follows. Negative regulator of class I heat shock genes (grpE-dnaK-dnaJ and groELS operons). Prevents heat-shock induction of these operons. This Burkholderia ambifaria (strain MC40-6) protein is Heat-inducible transcription repressor HrcA.